The sequence spans 322 residues: Probable heme-iron transport system permease protein IsdF (322 aa).

The next 9 helical transmembrane spans lie at 9-29 (LLFL…FVTG), 61-81 (ILIA…LQAA), 89-109 (ANII…MLFI), 114-134 (FYLP…IILL), 143-163 (VSMI…LEIL), 179-199 (IWSD…LTLL), 233-253 (VFLA…GIIV), 267-287 (VLIP…DLLG), and 294-314 (LEIP…IYLI).

It belongs to the binding-protein-dependent transport system permease family. FecCD subfamily.

It is found in the cell membrane. Part of the binding-protein-dependent transport system for heme-iron. Responsible for the translocation of the substrate across the membrane. This is Probable heme-iron transport system permease protein IsdF (isdF) from Staphylococcus aureus (strain MSSA476).